The primary structure comprises 548 residues: MKTKFIFITGGVLSSLGKGLAAASVGALLQARGLKVTIQKLDPYINVDPGTMNPFQHGEVYVTDDGAETDLDLGHYERYLGIPMNQRNNYTSGSIYHRVITKERRGDYLGGTVQVIPHITDEIKSVIMNLASDDLDVALVEIGGTVGDIEGQPFLEAIRQLRSDLGRDRCMYIHLTLVPYLAAAGEHKTKPTQHSVKELRSIGIQPDIILCRCEKAVTDDLKHKIALFCNVEKDAVFSAVDVKNIYEVPLSFYEEGFDQKIAIMLQLPAKNPDLSKWQELVDTCANPQGKVTIGIVGKYVDLKEAYKSLHEALIHGGVANKLAVELKYVNSELITDENVAESLAGLDGILVPGGFGSRGVEGKIRAIRYARENKVPFFGICLGMQCAVIEFARNVAGLPAANSEEFDEQTPDKVIYLMTEWFDFRSKQVERRDSGSEKGGTMRLGSYPCAVVKGTNAFTAYQAEKVDERHRHRFEFNNAYLDKLKEAGLVFSGLSPDGELVEMVEIKDHPWFLGCQFHPEFKSYPMTPHPLFREFIKAAGKQAVKSKR.

The segment at 1-267 (MKTKFIFITG…DQKIAIMLQL (267 aa)) is amidoligase domain. CTP is bound at residue Ser14. Ser14 contributes to the UTP binding site. ATP is bound by residues 15 to 20 (SLGKGL) and Asp72. Asp72 and Glu141 together coordinate Mg(2+). CTP contacts are provided by residues 148–150 (DIE), 188–193 (KTKPTQ), and Lys224. Residues 188–193 (KTKPTQ) and Lys224 contribute to the UTP site. The 254-residue stretch at 292-545 (TIGIVGKYVD…IKAAGKQAVK (254 aa)) folds into the Glutamine amidotransferase type-1 domain. L-glutamine is bound at residue Gly354. The Nucleophile; for glutamine hydrolysis role is filled by Cys381. L-glutamine-binding positions include 382–385 (LGMQ), Glu405, and Arg473. Active-site residues include His518 and Glu520.

This sequence belongs to the CTP synthase family. In terms of assembly, homotetramer.

The enzyme catalyses UTP + L-glutamine + ATP + H2O = CTP + L-glutamate + ADP + phosphate + 2 H(+). The catalysed reaction is L-glutamine + H2O = L-glutamate + NH4(+). It carries out the reaction UTP + NH4(+) + ATP = CTP + ADP + phosphate + 2 H(+). The protein operates within pyrimidine metabolism; CTP biosynthesis via de novo pathway; CTP from UDP: step 2/2. Its activity is regulated as follows. Allosterically activated by GTP, when glutamine is the substrate; GTP has no effect on the reaction when ammonia is the substrate. The allosteric effector GTP functions by stabilizing the protein conformation that binds the tetrahedral intermediate(s) formed during glutamine hydrolysis. Inhibited by the product CTP, via allosteric rather than competitive inhibition. Catalyzes the ATP-dependent amination of UTP to CTP with either L-glutamine or ammonia as the source of nitrogen. Regulates intracellular CTP levels through interactions with the four ribonucleotide triphosphates. The protein is CTP synthase of Oleidesulfovibrio alaskensis (strain ATCC BAA-1058 / DSM 17464 / G20) (Desulfovibrio alaskensis).